We begin with the raw amino-acid sequence, 110 residues long: Large ribosomal subunit protein uL22 (110 aa).

Belongs to the universal ribosomal protein uL22 family. Part of the 50S ribosomal subunit.

This protein binds specifically to 23S rRNA; its binding is stimulated by other ribosomal proteins, e.g. L4, L17, and L20. It is important during the early stages of 50S assembly. It makes multiple contacts with different domains of the 23S rRNA in the assembled 50S subunit and ribosome. Its function is as follows. The globular domain of the protein is located near the polypeptide exit tunnel on the outside of the subunit, while an extended beta-hairpin is found that lines the wall of the exit tunnel in the center of the 70S ribosome. The polypeptide is Large ribosomal subunit protein uL22 (Syntrophus aciditrophicus (strain SB)).